The chain runs to 45 residues: MRNTPFVVKINIIFLKVVSNTAVSVFCRDRRIRFNSDWSNSYFQK.

Belongs to the asfivirus C62L family.

This is an uncharacterized protein from Ornithodoros (relapsing fever ticks).